The chain runs to 208 residues: MKNFLQQINSYIKEAFNAGKYLYNGLSVTFDHLRRRPVTVQYPYEKLIPSERYRGRIHYEFDKCIACEVCVRVCPINLPVVDWVMNKETKKKELRNYSIDFGVCIFCGNCVEYCPTNCLSMTEEYELATFDRHNLNFDNVALGRLPTNVTTDPSIKPLRELAYLPKGVMDPHEIPASDIRVGKLPEEVYDWMRPTSNENKDKISNSNN.

2 consecutive 4Fe-4S ferredoxin-type domains span residues 55 to 84 and 95 to 124; these read GRIH…VDWV and RNYS…MTEE. Cys64, Cys67, Cys70, Cys74, Cys104, Cys107, Cys110, and Cys114 together coordinate [4Fe-4S] cluster.

This sequence belongs to the complex I 23 kDa subunit family. NDH-1 is composed of at least 11 different subunits. [4Fe-4S] cluster is required as a cofactor.

Its subcellular location is the cellular thylakoid membrane. It carries out the reaction a plastoquinone + NADH + (n+1) H(+)(in) = a plastoquinol + NAD(+) + n H(+)(out). The enzyme catalyses a plastoquinone + NADPH + (n+1) H(+)(in) = a plastoquinol + NADP(+) + n H(+)(out). Functionally, NDH-1 shuttles electrons from an unknown electron donor, via FMN and iron-sulfur (Fe-S) centers, to quinones in the respiratory and/or the photosynthetic chain. The immediate electron acceptor for the enzyme in this species is believed to be plastoquinone. Couples the redox reaction to proton translocation, and thus conserves the redox energy in a proton gradient. The protein is NAD(P)H-quinone oxidoreductase subunit I of Prochlorococcus marinus (strain MIT 9312).